The primary structure comprises 556 residues: Pumilio homolog 11 (556 aa).

Residues 215–556 (GGSRELDGSA…RIFSKNLWKK (342 aa)) enclose the PUM-HD domain. Pumilio repeat units follow at residues 238-276 (SMVD…IIFK), 277-313 (EVIN…ILIR), 316-351 (SKPG…SLVK), 353-388 (ALVP…FILE), 389-424 (AATK…KLVD), 425-459 (EISR…VLFE), 460-495 (LRGN…VNEL), and 496-531 (VSVL…SLVE).

It is found in the cytoplasm. Functionally, sequence-specific RNA-binding protein that regulates translation and mRNA stability by binding the 3'-UTR of target mRNAs. This chain is Pumilio homolog 11 (APUM11), found in Arabidopsis thaliana (Mouse-ear cress).